A 181-amino-acid chain; its full sequence is ATP-dependent protease subunit HslV (181 aa).

Thr-8 is an active-site residue. Positions 165, 168, and 171 each coordinate Na(+).

The protein belongs to the peptidase T1B family. HslV subfamily. In terms of assembly, a double ring-shaped homohexamer of HslV is capped on each side by a ring-shaped HslU homohexamer. The assembly of the HslU/HslV complex is dependent on binding of ATP.

The protein localises to the cytoplasm. It carries out the reaction ATP-dependent cleavage of peptide bonds with broad specificity.. Its activity is regulated as follows. Allosterically activated by HslU binding. Functionally, protease subunit of a proteasome-like degradation complex believed to be a general protein degrading machinery. This chain is ATP-dependent protease subunit HslV, found in Oceanobacillus iheyensis (strain DSM 14371 / CIP 107618 / JCM 11309 / KCTC 3954 / HTE831).